A 50-amino-acid polypeptide reads, in one-letter code: U3-ctenitoxin-Asp1a (50 aa).

In terms of tissue distribution, expressed by the venom gland.

The protein localises to the secreted. Its function is as follows. Possible neurotoxin. The chain is U3-ctenitoxin-Asp1a from Ancylometes sp. (South American fishing spider).